Reading from the N-terminus, the 112-residue chain is Putative transmembrane protein ORF112 (112 aa).

Helical transmembrane passes span 26–46 (FWEVICIYYFALQGSFLGILV), 50–70 (ILVTTLPLLPPALFFYLMYLF), and 80–100 (IFFPSLDPILIPILIFFLVGV).

Its subcellular location is the host membrane. The protein is Putative transmembrane protein ORF112 of Acidianus convivator (ABV).